The sequence spans 436 residues: Ribulose bisphosphate carboxylase large chain (436 aa).

Residues asparagine 104 and threonine 154 each coordinate substrate. Lysine 156 serves as the catalytic Proton acceptor. Lysine 158 lines the substrate pocket. Residues lysine 182, aspartate 184, and glutamate 185 each contribute to the Mg(2+) site. Lysine 182 carries the N6-carboxylysine modification. Histidine 275 acts as the Proton acceptor in catalysis. Arginine 276, histidine 308, and serine 360 together coordinate substrate.

The protein belongs to the RuBisCO large chain family. Type I subfamily. Heterohexadecamer of 8 large chains and 8 small chains. The cofactor is Mg(2+).

It localises to the plastid. It is found in the chloroplast. The catalysed reaction is 2 (2R)-3-phosphoglycerate + 2 H(+) = D-ribulose 1,5-bisphosphate + CO2 + H2O. The enzyme catalyses D-ribulose 1,5-bisphosphate + O2 = 2-phosphoglycolate + (2R)-3-phosphoglycerate + 2 H(+). Functionally, ruBisCO catalyzes two reactions: the carboxylation of D-ribulose 1,5-bisphosphate, the primary event in carbon dioxide fixation, as well as the oxidative fragmentation of the pentose substrate in the photorespiration process. Both reactions occur simultaneously and in competition at the same active site. The polypeptide is Ribulose bisphosphate carboxylase large chain (Euglena viridis (Cercaria viridis)).